Consider the following 793-residue polypeptide: DnaJ homolog subfamily C member 10 (793 aa).

Residues 1–32 (MGVWLNKDDFIRDLKRISLCLLILYVVVVVGT) form the signal peptide. The 66-residue stretch at 35 to 100 (NFYSLLGVSK…DLRKKYDKYG (66 aa)) folds into the J domain. A Thioredoxin 1 domain is found at 130–232 (EIITLERREF…ESLVAFAMQH (103 aa)). A disulfide bond links Cys158 and Cys161. Trxb stretches follow at residues 235-350 (STVT…LPDF) and 348-463 (PDFE…PQNF). 3 Thioredoxin domains span residues 454–553 (HVTT…IEDL), 557–665 (SVVS…SWGL), and 671–776 (ASID…ALIY). The cysteines at positions 480 and 483 are disulfide-linked. N-linked (GlcNAc...) asparagine glycosylation is present at Asn530. 2 disulfide bridges follow: Cys588/Cys591 and Cys700/Cys703. The Prevents secretion from ER motif lies at 790–793 (KDEL).

Interacts with HSPA5 (via its J domain). Interacts with EDEM1. As to expression, ubiquitous. Particularly abundant in secretory tissues. Ubiquitous in fetal tissues and tumor tissues. Higher expression in fetal tissues than in adult tissues. Expressed in testis, pancreas, fetal thymus and fetal kidney. High expression in heart, liver, kidney, and testis. Low expression in spleen and skeletal muscle.

It localises to the endoplasmic reticulum lumen. In terms of biological role, endoplasmic reticulum disulfide reductase involved both in the correct folding of proteins and degradation of misfolded proteins. Required for efficient folding of proteins in the endoplasmic reticulum by catalyzing the removal of non-native disulfide bonds formed during the folding of proteins, such as LDLR. Also involved in endoplasmic reticulum-associated degradation (ERAD) by reducing incorrect disulfide bonds in misfolded glycoproteins recognized by EDEM1. Interaction with HSPA5 is required its activity, not for the disulfide reductase activity, but to facilitate the release of DNAJC10 from its substrate. Promotes apoptotic signaling pathway in response to endoplasmic reticulum stress. This Mus musculus (Mouse) protein is DnaJ homolog subfamily C member 10 (Dnajc10).